The sequence spans 176 residues: 3-hydroxyanthranilate 3,4-dioxygenase (176 aa).

Arg44 contacts O2. Positions 48, 54, and 92 each coordinate Fe cation. Position 54 (Glu54) interacts with substrate. Residues Arg96 and Glu106 each coordinate substrate. Residues Cys121, Cys124, Cys158, and Cys161 each contribute to the Fe cation site.

The protein belongs to the 3-HAO family. In terms of assembly, homodimer. Fe(2+) is required as a cofactor.

It catalyses the reaction 3-hydroxyanthranilate + O2 = (2Z,4Z)-2-amino-3-carboxymuconate 6-semialdehyde. Its pathway is cofactor biosynthesis; NAD(+) biosynthesis; quinolinate from L-kynurenine: step 3/3. Functionally, catalyzes the oxidative ring opening of 3-hydroxyanthranilate to 2-amino-3-carboxymuconate semialdehyde, which spontaneously cyclizes to quinolinate. This is 3-hydroxyanthranilate 3,4-dioxygenase from Xanthomonas oryzae pv. oryzae (strain MAFF 311018).